The primary structure comprises 1370 residues: Reverse gyrase 1 (1370 aa).

The RG N-terminal-type zinc-finger motif lies at 6 to 47 (AASRGVYRYLCPNCGGPNSEERLSRGLPCPRCLPRLPRKGVS). Zn(2+) is bound by residues Cys-16, Cys-19, Cys-34, and Cys-37. ATP contacts are provided by residues Gln-95 and 112–119 (APTGVGKT). The region spanning 99–287 (AKRLARGDSF…RKKLLEVKRR (189 aa)) is the Helicase ATP-binding domain. The DEAD box signature appears at 220–223 (DDVD). The interval 643-1370 (ELVRTALLVV…VSRVWGAGVG (728 aa)) is topoisomerase I. One can recognise a Toprim domain in the interval 647–825 (TALLVVESPN…DIKRLEFHEV (179 aa)). A Mg(2+)-binding site is contributed by Glu-653. An RG C-terminal-type zinc finger spans residues 744–772 (IKRCLDCGYQFVDEASRCPRCGSELIRNS). 4 residues coordinate Zn(2+): Cys-747, Cys-750, Cys-761, and Cys-764. Asp-794 lines the Mg(2+) pocket. The Topo IA-type catalytic domain maps to 841–1323 (DDNLVDAQVV…SVFNEISDLA (483 aa)). Tyr-1028 functions as the O-(5'-phospho-DNA)-tyrosine intermediate in the catalytic mechanism.

The protein in the N-terminal section; belongs to the DEAD box helicase family. DDVD subfamily. It in the C-terminal section; belongs to the type IA topoisomerase family. Monomer. Zn(2+) serves as cofactor. Requires Mg(2+) as cofactor.

Its subcellular location is the cytoplasm. The enzyme catalyses ATP + H2O = ADP + phosphate + H(+). In terms of biological role, modifies the topological state of DNA by introducing positive supercoils in an ATP-dependent process, increasing the linking number in steps of +1. Binds to single-stranded DNA, transiently cleaves and then rejoins the ends, introducing a positive supercoil in the process. The scissile phosphodiester is attacked by the catalytic tyrosine of the enzyme, resulting in the formation of a DNA-(5'-phosphotyrosyl)-enzyme intermediate. Probably involved in rewinding DNA strands in regions of the chromosome that have opened up to allow replication, transcription, DNA repair and/or for DNA protection. The protein is Reverse gyrase 1 of Aeropyrum pernix (strain ATCC 700893 / DSM 11879 / JCM 9820 / NBRC 100138 / K1).